The chain runs to 385 residues: Leucine aminopeptidase 1 (385 aa).

Positions 1–19 (MKFPNLLSLGVAASTTVLA) are cleaved as a signal peptide. Positions 20–87 (AVPNQKPIGD…FPRTFAQTTV (68 aa)) are excised as a propeptide. Residue N177 is glycosylated (N-linked (GlcNAc...) asparagine). Positions 185, 204, 243, and 270 each coordinate Zn(2+). A disulfide bridge connects residues C319 and C323. Residue H352 coordinates Zn(2+).

Belongs to the peptidase M28 family. M28E subfamily. In terms of assembly, monomer. Zn(2+) serves as cofactor.

Its subcellular location is the secreted. Its function is as follows. Extracellular aminopeptidase that allows assimilation of proteinaceous substrates. The polypeptide is Leucine aminopeptidase 1 (LAP1) (Ajellomyces capsulatus (strain H88) (Darling's disease fungus)).